Consider the following 91-residue polypeptide: uncharacterized protein (91 aa).

A signal peptide spans 1 to 20; it reads MFSRVLALLAVLLLSANTWA.

This sequence belongs to the BhsA/McbA family.

The protein localises to the periplasm. This is an uncharacterized protein from Escherichia coli O157:H7.